A 329-amino-acid polypeptide reads, in one-letter code: Gut-specific cysteine proteinase (329 aa).

Positions 1-15 (MKFLILTALCAVTLA) are cleaved as a signal peptide. Positions 16-84 (FVPINHQSAV…ATEQEVVLAS (69 aa)) are cleaved as a propeptide — activation peptide. Disulfide bonds link Cys-98/Cys-127, Cys-110/Cys-155, Cys-146/Cys-204, Cys-147/Cys-151, Cys-183/Cys-208, and Cys-191/Cys-196. Cys-113 is a catalytic residue. Active-site residues include His-275 and Asn-295.

The protein belongs to the peptidase C1 family. In terms of tissue distribution, larvae exhibit strong expression in gut cells and weak expression in hypodermal cells. Adults exhibit the reverse: strong expression in hypodermal cells and weaker expression in gut cells.

Thiol protease. Has a role as a digestive enzyme. In Caenorhabditis elegans, this protein is Gut-specific cysteine proteinase (cpr-1).